The chain runs to 273 residues: HMP-PP phosphatase (273 aa).

Asp8 (nucleophile) is an active-site residue. Residues Asp8, Asp10, and Asp212 each contribute to the Mg(2+) site.

Belongs to the HAD-like hydrolase superfamily. Cof family. Mg(2+) is required as a cofactor.

The catalysed reaction is 4-amino-2-methyl-5-(diphosphooxymethyl)pyrimidine + H2O = 4-amino-2-methyl-5-(phosphooxymethyl)pyrimidine + phosphate + H(+). Catalyzes the hydrolysis of 4-amino-2-methyl-5-hydroxymethylpyrimidine pyrophosphate (HMP-PP) to 4-amino-2-methyl-5-hydroxymethylpyrimidine phosphate (HMP-P). The chain is HMP-PP phosphatase from Yersinia pseudotuberculosis serotype IB (strain PB1/+).